The sequence spans 268 residues: MAKRGESLRDKPKWSLEGMTALVTGGSKGLGKAVVEELAMLGARVHTCARDETQLQESLREWQAKGLQVTTSVCDVSSRDQREKLMETVSSLFQGKLSILVPNVGIGVLKPTTECTAEEFSFIIATNLESTFHFSQLAHPLLKASGSGNIVLMSSVAGVVNLGNTSIYGATKGAMNQLARNLACEWASDNIRANSVCPWFITTPSTKDFLGDKDVKEKVESVTPLRRVGEANEVSSLVAFLCLPAASYITGQTICVDGGFTINGFSLP.

22–46 (LVTGGSKGLGKAVVEELAMLGARVH) contacts NADP(+). Serine 155 is a binding site for substrate. Tyrosine 168 acts as the Proton acceptor in catalysis.

This sequence belongs to the short-chain dehydrogenases/reductases (SDR) family. SDR65C subfamily.

The sequence is that of Tropinone reductase homolog At2g29370 from Arabidopsis thaliana (Mouse-ear cress).